The chain runs to 120 residues: Large ribosomal subunit protein bL20 (120 aa).

This sequence belongs to the bacterial ribosomal protein bL20 family.

Functionally, binds directly to 23S ribosomal RNA and is necessary for the in vitro assembly process of the 50S ribosomal subunit. It is not involved in the protein synthesizing functions of that subunit. This Cereibacter sphaeroides (strain ATCC 17029 / ATH 2.4.9) (Rhodobacter sphaeroides) protein is Large ribosomal subunit protein bL20.